The primary structure comprises 1469 residues: snRNA-activating protein complex subunit 4 (1469 aa).

The disordered stretch occupies residues 16–82 (ELERILDPGS…DPKDKTLPED (67 aa)). The span at 24-36 (GSSGSHVEISESS) shows a compositional bias: low complexity. Acidic residues predominate over residues 37 to 53 (LESDSEADSLPSEDLDP). Residue Ser-68 is modified to Phosphoserine. The SNAPC5-binding stretch occupies residues 84–133 (ETCLQLNMVYQEVIQEKLAEANLLLAQNREQQEELMRDLAGSKGTKVKDG). The region spanning 250–288 (EEALLGNRLDSHDWEKISNINFEGSRSAEEIRKFWQNSE) is the Myb-like 1 domain. The 55-residue stretch at 289-343 (HPSINKQEWSREEEERLQAIAAAHGHLEWQKIAEELGTSRSAFQCLQKFQQHNKA) folds into the HTH myb-type 1 domain. Positions 317–341 (WQKIAEELGTSRSAFQCLQKFQQHN) form a DNA-binding region, H-T-H motif. Residues 344 to 395 (LKRKEWTEEEDRMLTQLVQEMRVGSHIPYRRIVYYMEGRDSMQLIYRWTKSL) enclose the Myb-like 2 domain. 2 consecutive HTH myb-type domains span residues 396-451 (DPGL…HFSL) and 452-503 (KKGR…GKKQ). 2 consecutive DNA-binding regions (H-T-H motif) follow at residues 424–447 (WFKI…LRRL) and 476–499 (WAKI…KIMM). 8 disordered regions span residues 501–558 (KKQG…GDRA), 577–661 (QSTS…QALE), 685–710 (RSCT…SGDS), 834–894 (ASSS…KTVS), 932–981 (PLPH…DKRL), 1001–1051 (PAAS…PSPT), 1121–1167 (AAQG…PAEA), and 1184–1266 (IPEP…GPEK). Over residues 503–516 (QGLRRRRRRARHSV) the composition is skewed to basic residues. Residues 519–541 (SSTSSSGSSSGSSGGSSSSSSSS) show a composition bias toward low complexity. Position 599 is a phosphoserine (Ser-599). Residues 602–618 (KGSSASQGGSKEASTTA) are compositionally biased toward polar residues. Ser-626 carries the phosphoserine modification. Residues 932 to 944 (PLPHTPHGRPAPG) show a composition bias toward pro residues. Residues 951–968 (PLSGPGAPAAAKPGTSGS) show a composition bias toward low complexity. The segment covering 1014 to 1029 (ISVSCPESGLGQSQAP) has biased composition (polar residues). Residues 1039-1051 (EAPPFLPAAPSPT) show a composition bias toward pro residues. The residue at position 1157 (Thr-1157) is a Phosphothreonine. Residues 1184 to 1195 (IPEPRTSSHADP) are compositionally biased toward basic and acidic residues. Ser-1224 bears the Phosphoserine mark. Residues 1281–1393 (ATQQWLGGQR…QGVRTTLSVP (113 aa)) are SNAPC2-binding. 3 positions are modified to phosphoserine: Ser-1398, Ser-1400, and Ser-1440. Residues 1430-1449 (APDSGKCSASSCLDTSNDPD) form a disordered region. Residues 1436–1445 (CSASSCLDTS) are compositionally biased toward polar residues.

As to quaternary structure, part of the SNAPc complex composed of 5 subunits: SNAPC1, SNAPC2, SNAPC3, SNAPC4 and SNAPC5. SNAPC4 interacts with SNAPC1, SNAPC2, SNAPC5, BRF2 and TBP.

It localises to the nucleus. Functionally, part of the SNAPc complex required for the transcription of both RNA polymerase II and III small-nuclear RNA genes. Binds to the proximal sequence element (PSE), a non-TATA-box basal promoter element common to these 2 types of genes. Recruits TBP and BRF2 to the U6 snRNA TATA box. This Homo sapiens (Human) protein is snRNA-activating protein complex subunit 4.